Consider the following 337-residue polypeptide: tRNA N6-adenosine threonylcarbamoyltransferase (337 aa).

Fe cation contacts are provided by His110 and His114. Substrate contacts are provided by residues 132 to 136 (VVSGG), Asp165, Gly178, Asp182, and Asn268. Residue Asp293 coordinates Fe cation.

It belongs to the KAE1 / TsaD family. The cofactor is Fe(2+).

It localises to the cytoplasm. The catalysed reaction is L-threonylcarbamoyladenylate + adenosine(37) in tRNA = N(6)-L-threonylcarbamoyladenosine(37) in tRNA + AMP + H(+). Functionally, required for the formation of a threonylcarbamoyl group on adenosine at position 37 (t(6)A37) in tRNAs that read codons beginning with adenine. Is involved in the transfer of the threonylcarbamoyl moiety of threonylcarbamoyl-AMP (TC-AMP) to the N6 group of A37, together with TsaE and TsaB. TsaD likely plays a direct catalytic role in this reaction. The chain is tRNA N6-adenosine threonylcarbamoyltransferase from Sulfurihydrogenibium sp. (strain YO3AOP1).